Consider the following 313-residue polypeptide: 2-dehydro-3-deoxygluconokinase/2-dehydro-3-deoxygalactonokinase (313 aa).

Substrate-binding positions include 34–38 (GSELN), Tyr90, 106–108 (YYR), and Arg166. Residues 164-166 (NIR), 226-231 (KLGSKG), and 255-258 (GAGD) each bind ATP. Substrate-binding residues include Asp258 and Asp294. Asp258 acts as the Proton acceptor in catalysis.

As to quaternary structure, homohexamer; trimer of dimers.

It carries out the reaction 2-dehydro-3-deoxy-D-gluconate + ATP = 2-dehydro-3-deoxy-6-phospho-D-gluconate + ADP + H(+). The enzyme catalyses 2-dehydro-3-deoxy-D-galactonate + ATP = 2-dehydro-3-deoxy-6-phospho-D-galactonate + ADP + H(+). It functions in the pathway carbohydrate acid metabolism; 2-dehydro-3-deoxy-D-gluconate degradation; D-glyceraldehyde 3-phosphate and pyruvate from 2-dehydro-3-deoxy-D-gluconate: step 1/2. In terms of biological role, involved in the degradation of glucose and galactose via the semi-phosphorylative Entner-Doudoroff pathway. Catalyzes the phosphorylation of 2-keto-3-deoxygluconate (KDG) and 2-keto-3-deoxygalactonate (KDGal) to produce 2-keto-3-deoxy-6-phosphogluconate (KDPG) and 2-keto-3-deoxy-6-phosphogalactonate (KDPGal), respectively. In Saccharolobus solfataricus (strain ATCC 35092 / DSM 1617 / JCM 11322 / P2) (Sulfolobus solfataricus), this protein is 2-dehydro-3-deoxygluconokinase/2-dehydro-3-deoxygalactonokinase (kdgK).